Here is a 269-residue protein sequence, read N- to C-terminus: Tryptophan synthase alpha chain (269 aa).

Active-site proton acceptor residues include Glu49 and Asp60.

It belongs to the TrpA family. Tetramer of two alpha and two beta chains.

The enzyme catalyses (1S,2R)-1-C-(indol-3-yl)glycerol 3-phosphate + L-serine = D-glyceraldehyde 3-phosphate + L-tryptophan + H2O. It participates in amino-acid biosynthesis; L-tryptophan biosynthesis; L-tryptophan from chorismate: step 5/5. Functionally, the alpha subunit is responsible for the aldol cleavage of indoleglycerol phosphate to indole and glyceraldehyde 3-phosphate. This is Tryptophan synthase alpha chain from Paramagnetospirillum magneticum (strain ATCC 700264 / AMB-1) (Magnetospirillum magneticum).